Consider the following 223-residue polypeptide: Protein-lysine N-methyltransferase CG9154 (223 aa).

The protein belongs to the class I-like SAM-binding methyltransferase superfamily. EFM5 family.

The protein localises to the cytoplasm. S-adenosyl-L-methionine-dependent protein-lysine N-methyltransferase that methylates elongation factor 1-alpha. This chain is Protein-lysine N-methyltransferase CG9154, found in Drosophila melanogaster (Fruit fly).